We begin with the raw amino-acid sequence, 243 residues long: Leucyl/phenylalanyl-tRNA--protein transferase (243 aa).

This sequence belongs to the L/F-transferase family.

The protein localises to the cytoplasm. The enzyme catalyses N-terminal L-lysyl-[protein] + L-leucyl-tRNA(Leu) = N-terminal L-leucyl-L-lysyl-[protein] + tRNA(Leu) + H(+). It catalyses the reaction N-terminal L-arginyl-[protein] + L-leucyl-tRNA(Leu) = N-terminal L-leucyl-L-arginyl-[protein] + tRNA(Leu) + H(+). The catalysed reaction is L-phenylalanyl-tRNA(Phe) + an N-terminal L-alpha-aminoacyl-[protein] = an N-terminal L-phenylalanyl-L-alpha-aminoacyl-[protein] + tRNA(Phe). Functionally, functions in the N-end rule pathway of protein degradation where it conjugates Leu, Phe and, less efficiently, Met from aminoacyl-tRNAs to the N-termini of proteins containing an N-terminal arginine or lysine. In Vibrio cholerae serotype O1 (strain ATCC 39315 / El Tor Inaba N16961), this protein is Leucyl/phenylalanyl-tRNA--protein transferase.